The sequence spans 470 residues: Cysteine--tRNA ligase (470 aa).

A Zn(2+)-binding site is contributed by C28. Positions 30-40 (PTVYNYIHIGN) match the 'HIGH' region motif. 3 residues coordinate Zn(2+): C212, H237, and E241. The short motif at 271-275 (KMSKS) is the 'KMSKS' region element. Residue K274 participates in ATP binding.

This sequence belongs to the class-I aminoacyl-tRNA synthetase family. In terms of assembly, monomer. Zn(2+) is required as a cofactor.

The protein resides in the cytoplasm. The catalysed reaction is tRNA(Cys) + L-cysteine + ATP = L-cysteinyl-tRNA(Cys) + AMP + diphosphate. This chain is Cysteine--tRNA ligase, found in Pediococcus pentosaceus (strain ATCC 25745 / CCUG 21536 / LMG 10740 / 183-1w).